A 545-amino-acid chain; its full sequence is Hydroxylamine reductase (545 aa).

[4Fe-4S] cluster-binding residues include Cys-7, Cys-10, Cys-19, and Cys-25. Hybrid [4Fe-2O-2S] cluster contacts are provided by His-241, Glu-265, Cys-309, Cys-400, Cys-428, Cys-453, Glu-488, and Lys-490. Cys-400 is subject to Cysteine persulfide; in oxidized form.

This sequence belongs to the HCP family. As to quaternary structure, monomer. Requires [4Fe-4S] cluster as cofactor. Hybrid [4Fe-2O-2S] cluster serves as cofactor.

It is found in the cytoplasm. The enzyme catalyses A + NH4(+) + H2O = hydroxylamine + AH2 + H(+). In terms of biological role, catalyzes the reduction of hydroxylamine to form NH(3) and H(2)O. In Desulfovibrio desulfuricans (strain ATCC 27774 / DSM 6949 / MB), this protein is Hydroxylamine reductase.